The chain runs to 167 residues: Crossover junction endodeoxyribonuclease RuvC (167 aa).

Catalysis depends on residues Asp-7, Glu-67, and Asp-139. Mg(2+) contacts are provided by Asp-7, Glu-67, and Asp-139.

It belongs to the RuvC family. Homodimer which binds Holliday junction (HJ) DNA. The HJ becomes 2-fold symmetrical on binding to RuvC with unstacked arms; it has a different conformation from HJ DNA in complex with RuvA. In the full resolvosome a probable DNA-RuvA(4)-RuvB(12)-RuvC(2) complex forms which resolves the HJ. The cofactor is Mg(2+).

The protein localises to the cytoplasm. The enzyme catalyses Endonucleolytic cleavage at a junction such as a reciprocal single-stranded crossover between two homologous DNA duplexes (Holliday junction).. In terms of biological role, the RuvA-RuvB-RuvC complex processes Holliday junction (HJ) DNA during genetic recombination and DNA repair. Endonuclease that resolves HJ intermediates. Cleaves cruciform DNA by making single-stranded nicks across the HJ at symmetrical positions within the homologous arms, yielding a 5'-phosphate and a 3'-hydroxyl group; requires a central core of homology in the junction. The consensus cleavage sequence is 5'-(A/T)TT(C/G)-3'. Cleavage occurs on the 3'-side of the TT dinucleotide at the point of strand exchange. HJ branch migration catalyzed by RuvA-RuvB allows RuvC to scan DNA until it finds its consensus sequence, where it cleaves and resolves the cruciform DNA. This Akkermansia muciniphila (strain ATCC BAA-835 / DSM 22959 / JCM 33894 / BCRC 81048 / CCUG 64013 / CIP 107961 / Muc) protein is Crossover junction endodeoxyribonuclease RuvC.